A 1225-amino-acid chain; its full sequence is Chromosome-associated kinesin KIF4 (1225 aa).

In terms of domain architecture, Kinesin motor spans Ile-9–Ile-338. Residue Gly-88–Thr-95 coordinates ATP. Residues Glu-352–Val-1003 adopt a coiled-coil conformation. Disordered stretches follow at residues Gln-498–Gln-520, Asn-717–Gly-744, and Gly-1006–Glu-1047. Polar residues predominate over residues Gly-507–Gln-520. The segment covering Arg-719–Gln-738 has biased composition (basic and acidic residues). Residues Ala-1004–Asp-1225 are globular.

The protein belongs to the TRAFAC class myosin-kinesin ATPase superfamily. Kinesin family. Chromokinesin subfamily. [2Fe-2S] cluster serves as cofactor. Requires [4Fe-4S] cluster as cofactor. As to expression, expressed in proliferating cells; neuroepithelium of embryos.

It localises to the nucleus. It is found in the chromosome. The protein resides in the cytoplasm. Its subcellular location is the cytoskeleton. Iron-sulfur (Fe-S) cluster binding motor protein that has a role in chromosome segregation during mitosis. Required for mitotic chromosomal positioning and bipolar spindle stabilization. In Gallus gallus (Chicken), this protein is Chromosome-associated kinesin KIF4 (KIF4).